The chain runs to 1081 residues: Dyslexia-associated protein KIAA0319 homolog (1081 aa).

A signal peptide spans 1 to 22 (MVSPPGVLSSLLLLAAMAGGSS). The MANSC domain occupies 23 to 99 (QQCSEGRTYS…PRTTGPIRSY (77 aa)). Residues 23-964 (QQCSEGRTYS…WDGESNCEWS (942 aa)) lie on the Extracellular side of the membrane. The segment at 168–331 (LQPSNQQDPR…VLTGLTPPPW (164 aa)) is disordered. N-linked (GlcNAc...) asparagine glycosylation occurs at Asn-196. Composition is skewed to polar residues over residues 197-206 (ATATGDNSAA) and 222-234 (EQLQALNESTWSP). Asn-228 carries an N-linked (GlcNAc...) asparagine glycan. The segment covering 236 to 255 (PGHSSISSVWPSSASPLPTE) has biased composition (low complexity). N-linked (GlcNAc...) asparagine glycans are attached at residues Asn-272 and Asn-302. Polar residues-rich tracts occupy residues 283 to 307 (HNPSPASLESSPATTEKNSNFTVTP) and 314 to 324 (TPTFPTSTVLT). PKD domains are found at residues 345-436 (AVSA…VMPA), 444-533 (VAVV…IRDA), 539-629 (VANA…VQAE), 630-723 (NNQA…VKKE), and 729-820 (RAQA…VLPD). N-linked (GlcNAc...) asparagine glycosylation is found at Asn-430, Asn-507, Asn-522, Asn-545, and Asn-560. A glycan (N-linked (GlcNAc...) asparagine) is linked at Asn-742. Residues 965-985 (VFYVAALALTLTLLTGAVSWL) form a helical membrane-spanning segment. Residues 986-1081 (CICCCRRRKR…VSFGYYSKDR (96 aa)) are Cytoplasmic-facing. The Endocytosis signal signature appears at 1004–1007 (YTIL). Position 1009 is a phosphoserine (Ser-1009).

As to quaternary structure, homodimer. Interacts with AP2M1; required for clathrin-mediated endocytosis. N-glycosylated. In terms of processing, O-glycosylated. Post-translationally, shedding of the extracellular domain and intramembrane cleavage produce several proteolytic products. The intramembrane cleavage releases a soluble cytoplasmic polypeptide that translocates to the nucleolus.

The protein localises to the cell membrane. Its subcellular location is the early endosome membrane. Its function is as follows. Involved in neuronal migration during development of the cerebral neocortex. May function in a cell autonomous and a non-cell autonomous manner and play a role in appropriate adhesion between migrating neurons and radial glial fibers. May also regulate growth and differentiation of dendrites. This chain is Dyslexia-associated protein KIAA0319 homolog (Kiaa0319), found in Mus musculus (Mouse).